Reading from the N-terminus, the 265-residue chain is Glutamate racemase (265 aa).

Residues 13-14 (DS) and 45-46 (YG) contribute to the substrate site. The Proton donor/acceptor role is filled by Cys77. 78 to 79 (NT) contacts substrate. Catalysis depends on Cys185, which acts as the Proton donor/acceptor. 186–187 (TH) is a binding site for substrate.

This sequence belongs to the aspartate/glutamate racemases family.

It catalyses the reaction L-glutamate = D-glutamate. It participates in cell wall biogenesis; peptidoglycan biosynthesis. Functionally, provides the (R)-glutamate required for cell wall biosynthesis. This is Glutamate racemase from Vibrio cholerae serotype O1 (strain ATCC 39315 / El Tor Inaba N16961).